Reading from the N-terminus, the 55-residue chain is Large ribosomal subunit protein bL32 (55 aa).

Over residues 1 to 23 (MAVPKKKTSKAKRDQRRAHWKRK) the composition is skewed to basic residues. Residues 1-26 (MAVPKKKTSKAKRDQRRAHWKRKATI) form a disordered region.

This sequence belongs to the bacterial ribosomal protein bL32 family.

The polypeptide is Large ribosomal subunit protein bL32 (Picosynechococcus sp. (strain ATCC 27264 / PCC 7002 / PR-6) (Agmenellum quadruplicatum)).